A 294-amino-acid chain; its full sequence is 4-hydroxy-tetrahydrodipicolinate synthase (294 aa).

Pyruvate is bound at residue threonine 44. Tyrosine 132 (proton donor/acceptor) is an active-site residue. The active-site Schiff-base intermediate with substrate is lysine 161. Residue isoleucine 206 participates in pyruvate binding.

It belongs to the DapA family. As to quaternary structure, homotetramer; dimer of dimers.

The protein localises to the cytoplasm. The catalysed reaction is L-aspartate 4-semialdehyde + pyruvate = (2S,4S)-4-hydroxy-2,3,4,5-tetrahydrodipicolinate + H2O + H(+). It participates in amino-acid biosynthesis; L-lysine biosynthesis via DAP pathway; (S)-tetrahydrodipicolinate from L-aspartate: step 3/4. In terms of biological role, catalyzes the condensation of (S)-aspartate-beta-semialdehyde [(S)-ASA] and pyruvate to 4-hydroxy-tetrahydrodipicolinate (HTPA). The sequence is that of 4-hydroxy-tetrahydrodipicolinate synthase from Thermotoga sp. (strain RQ2).